A 234-amino-acid chain; its full sequence is Cell polarity protein alp11 (234 aa).

One can recognise a Ubiquitin-like domain in the interval 4-88; the sequence is ITLFIKSSSA…IVVEDTRPPH (85 aa). The 43-residue stretch at 174 to 216 folds into the CAP-Gly domain; sequence VPEINNDNLWVGVEFDEPVGKNDGTVSGKRYFNAKNKHGSFLR. Phosphoserine is present on Ser213.

This sequence belongs to the TBCB family. In terms of assembly, binds to monomeric alpha-tubulin. Interacts with alp21.

The protein localises to the cytoplasm. It is found in the cytoskeleton. In terms of biological role, required for microtubule function and cell polarity. Involved in the proper folding of alpha-tubulin. The polypeptide is Cell polarity protein alp11 (alp11) (Schizosaccharomyces pombe (strain 972 / ATCC 24843) (Fission yeast)).